The chain runs to 223 residues: Uracil-DNA glycosylase (223 aa).

The active-site Proton acceptor is the Asp67.

Belongs to the uracil-DNA glycosylase (UDG) superfamily. UNG family.

Its subcellular location is the cytoplasm. It carries out the reaction Hydrolyzes single-stranded DNA or mismatched double-stranded DNA and polynucleotides, releasing free uracil.. Excises uracil residues from the DNA which can arise as a result of misincorporation of dUMP residues by DNA polymerase or due to deamination of cytosine. The chain is Uracil-DNA glycosylase from Borrelia turicatae (strain 91E135).